The chain runs to 257 residues: Imidazole glycerol phosphate synthase subunit HisF (257 aa).

Residues D12 and D131 contribute to the active site.

The protein belongs to the HisA/HisF family. In terms of assembly, heterodimer of HisH and HisF.

It localises to the cytoplasm. The catalysed reaction is 5-[(5-phospho-1-deoxy-D-ribulos-1-ylimino)methylamino]-1-(5-phospho-beta-D-ribosyl)imidazole-4-carboxamide + L-glutamine = D-erythro-1-(imidazol-4-yl)glycerol 3-phosphate + 5-amino-1-(5-phospho-beta-D-ribosyl)imidazole-4-carboxamide + L-glutamate + H(+). The protein operates within amino-acid biosynthesis; L-histidine biosynthesis; L-histidine from 5-phospho-alpha-D-ribose 1-diphosphate: step 5/9. Functionally, IGPS catalyzes the conversion of PRFAR and glutamine to IGP, AICAR and glutamate. The HisF subunit catalyzes the cyclization activity that produces IGP and AICAR from PRFAR using the ammonia provided by the HisH subunit. This Hydrogenovibrio crunogenus (strain DSM 25203 / XCL-2) (Thiomicrospira crunogena) protein is Imidazole glycerol phosphate synthase subunit HisF.